Here is an 879-residue protein sequence, read N- to C-terminus: DNA mismatch repair protein MutS (879 aa).

Gly629–Ser636 provides a ligand contact to ATP.

The protein belongs to the DNA mismatch repair MutS family.

Its function is as follows. This protein is involved in the repair of mismatches in DNA. It is possible that it carries out the mismatch recognition step. This protein has a weak ATPase activity. The protein is DNA mismatch repair protein MutS of Erythrobacter litoralis (strain HTCC2594).